A 50-amino-acid chain; its full sequence is Sperm protamine P1 (50 aa).

Belongs to the protamine P1 family. Testis.

Its subcellular location is the nucleus. It is found in the chromosome. Its function is as follows. Protamines substitute for histones in the chromatin of sperm during the haploid phase of spermatogenesis. They compact sperm DNA into a highly condensed, stable and inactive complex. The chain is Sperm protamine P1 (PRM1) from Trachypithecus phayrei (Phayre's leaf monkey).